The primary structure comprises 295 residues: Proline iminopeptidase (295 aa).

Residues 29–279 (PLLLLHGGPG…GCGHMPFVQE (251 aa)) enclose the AB hydrolase-1 domain. The active-site Nucleophile is the serine 107. Residue aspartate 246 is part of the active site. Residue histidine 273 is the Proton donor of the active site.

This sequence belongs to the peptidase S33 family.

It is found in the cell envelope. The enzyme catalyses Release of N-terminal proline from a peptide.. Releases the N-terminal proline from various substrates. This chain is Proline iminopeptidase, found in Lactobacillus delbrueckii subsp. bulgaricus (strain ATCC 11842 / DSM 20081 / BCRC 10696 / JCM 1002 / NBRC 13953 / NCIMB 11778 / NCTC 12712 / WDCM 00102 / Lb 14).